A 387-amino-acid chain; its full sequence is Galactokinase (387 aa).

33 to 36 (EHTD) is a substrate binding site. ATP contacts are provided by residues Ser67 and 124-130 (GSGLSSS). The Mg(2+) site is built by Ser130 and Glu162. Residue Asp174 is the Proton acceptor of the active site. Substrate is bound at residue Tyr224.

This sequence belongs to the GHMP kinase family. GalK subfamily.

Its subcellular location is the cytoplasm. It carries out the reaction alpha-D-galactose + ATP = alpha-D-galactose 1-phosphate + ADP + H(+). The protein operates within carbohydrate metabolism; galactose metabolism. Catalyzes the transfer of the gamma-phosphate of ATP to D-galactose to form alpha-D-galactose-1-phosphate (Gal-1-P). In Ligilactobacillus salivarius (strain UCC118) (Lactobacillus salivarius), this protein is Galactokinase.